The primary structure comprises 363 residues: Histidinol-phosphate aminotransferase (363 aa).

Lys-218 carries the N6-(pyridoxal phosphate)lysine modification.

The protein belongs to the class-II pyridoxal-phosphate-dependent aminotransferase family. Histidinol-phosphate aminotransferase subfamily. Homodimer. Requires pyridoxal 5'-phosphate as cofactor.

The enzyme catalyses L-histidinol phosphate + 2-oxoglutarate = 3-(imidazol-4-yl)-2-oxopropyl phosphate + L-glutamate. It participates in amino-acid biosynthesis; L-histidine biosynthesis; L-histidine from 5-phospho-alpha-D-ribose 1-diphosphate: step 7/9. In Xanthomonas axonopodis pv. citri (strain 306), this protein is Histidinol-phosphate aminotransferase.